The sequence spans 37 residues: Large ribosomal subunit protein bL36 (37 aa).

This sequence belongs to the bacterial ribosomal protein bL36 family.

This Bordetella bronchiseptica (strain ATCC BAA-588 / NCTC 13252 / RB50) (Alcaligenes bronchisepticus) protein is Large ribosomal subunit protein bL36.